Consider the following 246-residue polypeptide: Probable H/ACA ribonucleoprotein complex subunit 1-like protein (246 aa).

2 disordered regions span residues 1-61 (MSFR…GGYD) and 155-246 (PQVG…TKFD). RGG-box stretches follow at residues 4–59 (RGGR…GRGG) and 161–223 (RGRG…RGRG). Basic and acidic residues predominate over residues 168 to 180 (RGGDRGRGGDRGR). A compositionally biased stretch (gly residues) spans 181-221 (GGFGGRGGGGGGFRGGSRGGFGGGDRGGFRGGRGGDFGGRG).

This sequence belongs to the GAR1 family. As to quaternary structure, component of the small nucleolar ribonucleoprotein particle containing H/ACA-type snoRNAs (H/ACA snoRNPs).

It is found in the nucleus. The protein localises to the nucleolus. Required for ribosome biogenesis. Part of a complex which catalyzes pseudouridylation of rRNA. This involves the isomerization of uridine such that the ribose is subsequently attached to C5, instead of the normal N1. Pseudouridine ('psi') residues may serve to stabilize the conformation of rRNAs. This chain is Probable H/ACA ribonucleoprotein complex subunit 1-like protein, found in Caenorhabditis briggsae.